We begin with the raw amino-acid sequence, 279 residues long: Orotidine 5'-phosphate decarboxylase (279 aa).

Substrate-binding positions include aspartate 8, lysine 30, 58 to 67, threonine 117, arginine 177, glutamine 186, glycine 206, and arginine 207; that span reads DLKIHDIPNT. Lysine 60 serves as the catalytic Proton donor.

This sequence belongs to the OMP decarboxylase family. Type 1 subfamily. As to quaternary structure, homodimer.

It carries out the reaction orotidine 5'-phosphate + H(+) = UMP + CO2. The protein operates within pyrimidine metabolism; UMP biosynthesis via de novo pathway; UMP from orotate: step 2/2. Functionally, catalyzes the decarboxylation of orotidine 5'-monophosphate (OMP) to uridine 5'-monophosphate (UMP). This chain is Orotidine 5'-phosphate decarboxylase, found in Campylobacter jejuni (strain RM1221).